The chain runs to 274 residues: Beta-lactamase OXA-9 (274 aa).

The first 24 residues, 1–24, serve as a signal peptide directing secretion; it reads MKKILLLHMLVFVSATLPISSVAS. The Acyl-ester intermediate role is filled by serine 58. An N6-carboxylysine modification is found at lysine 61. Residue 206–208 coordinates substrate; the sequence is KSG.

Belongs to the class-D beta-lactamase family.

The catalysed reaction is a beta-lactam + H2O = a substituted beta-amino acid. Oxacillin-hydrolyzing beta-lactamase. Confers resistance to beta-lactam antibiotics but at a significantly lower level than the TEM bla gene product. This Klebsiella aerogenes (Enterobacter aerogenes) protein is Beta-lactamase OXA-9 (bla).